The following is a 376-amino-acid chain: Chaperone protein DnaJ (376 aa).

The 66-residue stretch at 5 to 70 folds into the J domain; that stretch reads DYYEVLGVAR…NKRRAYDAHG (66 aa). The CR-type zinc-finger motif lies at 132 to 209; it reads GIERRIEIPT…CHGAGRVEED (78 aa). The Zn(2+) site is built by Cys-145, Cys-148, Cys-161, Cys-164, Cys-183, Cys-186, Cys-197, and Cys-200. CXXCXGXG motif repeat units follow at residues 145–152, 161–168, 183–190, and 197–204; these read CEPCHGSG, CATCHGRG, CPHCDGRG, and CKTCHGAG.

It belongs to the DnaJ family. In terms of assembly, homodimer. The cofactor is Zn(2+).

Its subcellular location is the cytoplasm. Its function is as follows. Participates actively in the response to hyperosmotic and heat shock by preventing the aggregation of stress-denatured proteins and by disaggregating proteins, also in an autonomous, DnaK-independent fashion. Unfolded proteins bind initially to DnaJ; upon interaction with the DnaJ-bound protein, DnaK hydrolyzes its bound ATP, resulting in the formation of a stable complex. GrpE releases ADP from DnaK; ATP binding to DnaK triggers the release of the substrate protein, thus completing the reaction cycle. Several rounds of ATP-dependent interactions between DnaJ, DnaK and GrpE are required for fully efficient folding. Also involved, together with DnaK and GrpE, in the DNA replication of plasmids through activation of initiation proteins. This Xanthomonas campestris pv. campestris (strain 8004) protein is Chaperone protein DnaJ.